The following is a 664-amino-acid chain: ATP-dependent RNA helicase MSS116, mitochondrial (664 aa).

A mitochondrion-targeting transit peptide spans 1-26 (MLTSILIKGRTPVLASRNLLAALSNC). The tract at residues 42–79 (NRDQRNFGRNQRNNNSNRYRNSRFNSRPRTRSREDDDE) is disordered. Positions 48–68 (FGRNQRNNNSNRYRNSRFNSR) are enriched in low complexity. A Q motif motif is present at residues 106–134 (SLLEEGVLDKEIHKAITRMEFPGLTPVQQ). Positions 139–326 (PILSSEDHDV…NNIMNKKECL (188 aa)) constitute a Helicase ATP-binding domain. 152-159 (AKTGTGKT) provides a ligand contact to ATP. A DEAD box motif is present at residues 267–270 (DEAD). One can recognise a Helicase C-terminal domain in the interval 355–512 (SIFAAVEHIK…EKYEPSEEIK (158 aa)). Residues 602–664 (GNNKSYDYDD…NYSSRNSNIY (63 aa)) form a disordered region. Positions 628–638 (QNRDYDDEPFR) are enriched in basic and acidic residues. The segment covering 639-649 (RSNNNRRSFSR) has biased composition (low complexity). Positions 653-664 (KNNYSSRNSNIY) are enriched in polar residues.

This sequence belongs to the DEAD box helicase family. DDX18/HAS1 subfamily.

Its subcellular location is the mitochondrion matrix. It carries out the reaction ATP + H2O = ADP + phosphate + H(+). Its function is as follows. ATP-dependent RNA helicase required for mitochondrial splicing of group I and II introns. Specifically involved in the ATP-dependent splicing of the bl1 intron of COB. Also required for efficient mitochondrial translation. This chain is ATP-dependent RNA helicase MSS116, mitochondrial (MSS116), found in Saccharomyces cerevisiae (strain ATCC 204508 / S288c) (Baker's yeast).